We begin with the raw amino-acid sequence, 249 residues long: AA9 family lytic polysaccharide monooxygenase A (249 aa).

An N-terminal signal peptide occupies residues 1-19; sequence MRGPLCFTLIAIAVTSVVA. Cu(2+) contacts are provided by His20 and His97. A disulfide bridge connects residues Cys60 and Cys183. His163 is an O2 binding site. Tyr180 contributes to the Cu(2+) binding site.

This sequence belongs to the polysaccharide monooxygenase AA9 family. The cofactor is Cu(2+).

Its subcellular location is the secreted. The enzyme catalyses [(1-&gt;4)-beta-D-glucosyl]n+m + reduced acceptor + O2 = 4-dehydro-beta-D-glucosyl-[(1-&gt;4)-beta-D-glucosyl]n-1 + [(1-&gt;4)-beta-D-glucosyl]m + acceptor + H2O.. Functionally, lytic polysaccharide monooxygenase (LPMO) that depolymerizes crystalline and amorphous polysaccharides via the oxidation of scissile alpha- or beta-(1-4)-glycosidic bonds, yielding C4 oxidation products. Catalysis by LPMOs requires the reduction of the active-site copper from Cu(II) to Cu(I) by a reducing agent and H(2)O(2) or O(2) as a cosubstrate. Active on cellulose and cello-oligosaccharides, as well as plant cell wall-derived hemicellulosic polysaccharides. Also active on cello-oligosaccharides such as cellohexaose, cellopentaose or cellotetraose. This is AA9 family lytic polysaccharide monooxygenase A from Armillaria gallica (Bulbous honey fungus).